Reading from the N-terminus, the 403-residue chain is Phosphoglycerate kinase (403 aa).

Residues D21 to N23, R36, H59 to R62, R119, and R159 contribute to the substrate site. Residues K214, G301, E332, and G359 to S362 each bind ATP.

This sequence belongs to the phosphoglycerate kinase family. In terms of assembly, monomer.

Its subcellular location is the cytoplasm. It catalyses the reaction (2R)-3-phosphoglycerate + ATP = (2R)-3-phospho-glyceroyl phosphate + ADP. The protein operates within carbohydrate degradation; glycolysis; pyruvate from D-glyceraldehyde 3-phosphate: step 2/5. The protein is Phosphoglycerate kinase of Lactobacillus delbrueckii subsp. bulgaricus (strain ATCC 11842 / DSM 20081 / BCRC 10696 / JCM 1002 / NBRC 13953 / NCIMB 11778 / NCTC 12712 / WDCM 00102 / Lb 14).